Consider the following 371-residue polypeptide: uncharacterized protein (371 aa).

An ATP-binding site is contributed by 33-40 (GPLNSGKT).

Belongs to the archaeal ATPase family.

This is an uncharacterized protein from Methanocaldococcus jannaschii (strain ATCC 43067 / DSM 2661 / JAL-1 / JCM 10045 / NBRC 100440) (Methanococcus jannaschii).